Reading from the N-terminus, the 427-residue chain is Methylenetetrahydrofolate--tRNA-(uracil-5-)-methyltransferase TrmFO (427 aa).

6 to 11 (GAGLAG) serves as a coordination point for FAD.

It belongs to the MnmG family. TrmFO subfamily. FAD is required as a cofactor.

The protein localises to the cytoplasm. It carries out the reaction uridine(54) in tRNA + (6R)-5,10-methylene-5,6,7,8-tetrahydrofolate + NADH + H(+) = 5-methyluridine(54) in tRNA + (6S)-5,6,7,8-tetrahydrofolate + NAD(+). It catalyses the reaction uridine(54) in tRNA + (6R)-5,10-methylene-5,6,7,8-tetrahydrofolate + NADPH + H(+) = 5-methyluridine(54) in tRNA + (6S)-5,6,7,8-tetrahydrofolate + NADP(+). In terms of biological role, catalyzes the folate-dependent formation of 5-methyl-uridine at position 54 (M-5-U54) in all tRNAs. The protein is Methylenetetrahydrofolate--tRNA-(uracil-5-)-methyltransferase TrmFO of Acholeplasma laidlawii (strain PG-8A).